A 384-amino-acid polypeptide reads, in one-letter code: MTNLIKNVKDAFNSVLSYAPTHIVQAPGRVNLIGEHTDYNDGFVLPCAINYQTVVAAAKRDDNIVRVVSVDYGNETDEFDITQEITFQENKMWSNYIRGVVKCLIDRGYEFKGADISVSGNVPQGAGLSSSAALEVVIGQTFKELYNLNISQAEIALNGQQAENEFVGCNCGIMDQMISAEGNENHAMLLDCRSLETTAVSMPEDMSVVIINSNKKRGLVDSEYNTRREQCEEAARIFGVKALRDVTIEEFNAKAHELDEMVAKRARHVITENDRTEEAAKVLASGDMKRMAVLMAESHASMRDDFEITVSEVDTLVDIVKNVIGAEGGVRMTGGGFGGCIVALVPPMLVDEVKAAVEELYEAKTGLKESIYVCQATNGAGLVL.

35–38 serves as a coordination point for substrate; it reads EHTD. Residues serine 69 and 125-131 contribute to the ATP site; that span reads GAGLSSS. 2 residues coordinate Mg(2+): serine 131 and glutamate 163. Residue aspartate 175 is the Proton acceptor of the active site. Tyrosine 224 lines the substrate pocket.

Belongs to the GHMP kinase family. GalK subfamily.

The protein resides in the cytoplasm. The catalysed reaction is alpha-D-galactose + ATP = alpha-D-galactose 1-phosphate + ADP + H(+). It participates in carbohydrate metabolism; galactose metabolism. In terms of biological role, catalyzes the transfer of the gamma-phosphate of ATP to D-galactose to form alpha-D-galactose-1-phosphate (Gal-1-P). In Aliivibrio fischeri (strain ATCC 700601 / ES114) (Vibrio fischeri), this protein is Galactokinase.